A 47-amino-acid polypeptide reads, in one-letter code: Small ribosomal subunit protein uS14 (47 aa).

Zn(2+) is bound by residues C12, C15, C30, and C33.

Belongs to the universal ribosomal protein uS14 family. Zinc-binding uS14 subfamily. As to quaternary structure, part of the 30S ribosomal subunit. Zn(2+) serves as cofactor.

Binds 16S rRNA, required for the assembly of 30S particles. The polypeptide is Small ribosomal subunit protein uS14 (Methanosphaera stadtmanae (strain ATCC 43021 / DSM 3091 / JCM 11832 / MCB-3)).